Consider the following 401-residue polypeptide: MIIHPKTRGFICTTTHPVGCEYNVLEQIQSTRARGVRSNGPKKVVVIGASSGYGLATRISAAFGFGADTLGVFFEKPGTEKKPGTAGWYNAAAFDKSAKNAGLYSRSINGDAFSDEMRAKVIEIIKSEMGGHVDLVVYSLASPLRKMPSTGEIKRSVLKPIGVAHTSNAIDTNKDQIIQATVEPATEQEIADTVAVMGGQDWELWINALAQADVLAPQTRTVAFSYIGTEITWPIYWHGALGKAKADLDATSRRLDARLQFLGGGANVAVLKSVVTQASAAIPALPLYIAIVFKVMKEKGLHEGTIEQADRLLRERLYREDGQPAAIDEEHRLRLDDWELREDVQAACKVIWEQVTNENLFQLTDYANYKRDFLKLFGFERADVDYDADVNPEVAFDVIEL.

NAD(+)-binding positions include 48-53 (GASSGY), 74-75 (FE), 111-112 (DA), and 140-141 (LA). Tyr-226 is a binding site for substrate. Residue Tyr-236 is the Proton donor of the active site. NAD(+) is bound by residues Lys-245 and 274–276 (VVT).

This sequence belongs to the TER reductase family. As to quaternary structure, monomer.

It carries out the reaction a 2,3-saturated acyl-[ACP] + NAD(+) = a (2E)-enoyl-[ACP] + NADH + H(+). Its pathway is lipid metabolism; fatty acid biosynthesis. Involved in the final reduction of the elongation cycle of fatty acid synthesis (FAS II). Catalyzes the reduction of a carbon-carbon double bond in an enoyl moiety that is covalently linked to an acyl carrier protein (ACP). This Xylella fastidiosa (strain Temecula1 / ATCC 700964) protein is Enoyl-[acyl-carrier-protein] reductase [NADH].